A 521-amino-acid chain; its full sequence is FAD-dependent monooxygenase mdpD (521 aa).

Positions 1-48 (MTHFPVNIASDKQEFDPERWAKTPTTESSVNGENGTAPTSGLPSRHPS) are disordered. Over residues 11–21 (DKQEFDPERWA) the composition is skewed to basic and acidic residues. Residues 23 to 48 (TPTTESSVNGENGTAPTSGLPSRHPS) show a composition bias toward polar residues. Valine 94 and arginine 160 together coordinate FAD. Residues arginine 244 and tyrosine 271 contribute to the active site. Positions 369 and 382 each coordinate FAD.

Belongs to the paxM FAD-dependent monooxygenase family. FAD is required as a cofactor.

Its pathway is secondary metabolite biosynthesis. Its function is as follows. FAD-dependent monooxygenase; part of the gene cluster that mediates the biosynthesis of monodictyphenone, a prenyl xanthone derivative. The pathway begins with the synthesis of atrochrysone thioester by the polyketide synthase (PKS) mdpG. The atrochrysone carboxyl ACP thioesterase mdpF then breaks the thioester bond and releases the atrochrysone carboxylic acid from mdpG. The atrochrysone carboxylic acid is then converted to atrochrysone which is further transformed into emodin anthrone. The next step is performed by the anthrone oxygenase mdpH that catalyzes the oxidation of emodinanthrone to emodin. Emodin is further modified to yield monodictyphenone via several steps involving mdpB, mdpC mdpJ, mdpK and mdpL. These enzymes with xptA, xptB and xptC are also proposed to be involved in the synthesis of shamixanthone from emodin. Especially, direct reduction of emodin by the short chain dehydrogenase mdpC followed by dehydration catalyzed by the scytalone dehydratase-like protein mdpB gives loss of oxygen and formation of chrysophanol intermediate in two simple steps. The chain is FAD-dependent monooxygenase mdpD from Emericella nidulans (strain FGSC A4 / ATCC 38163 / CBS 112.46 / NRRL 194 / M139) (Aspergillus nidulans).